Here is a 309-residue protein sequence, read N- to C-terminus: HPr kinase/phosphorylase (309 aa).

Active-site residues include His-138 and Lys-159. 153 to 160 is a binding site for ATP; it reads GDSGIGKS. Ser-160 provides a ligand contact to Mg(2+). Asp-177 serves as the catalytic Proton acceptor; for phosphorylation activity. Proton donor; for dephosphorylation activity. The tract at residues 201 to 210 is important for the catalytic mechanism of both phosphorylation and dephosphorylation; the sequence is LEIRGVGIID. Residue Glu-202 coordinates Mg(2+). The active site involves Arg-243. Residues 264-269 form an important for the catalytic mechanism of dephosphorylation region; it reads PVKTGR.

The protein belongs to the HPrK/P family. Homohexamer. Mg(2+) serves as cofactor.

It carries out the reaction [HPr protein]-L-serine + ATP = [HPr protein]-O-phospho-L-serine + ADP + H(+). It catalyses the reaction [HPr protein]-O-phospho-L-serine + phosphate + H(+) = [HPr protein]-L-serine + diphosphate. Functionally, catalyzes the ATP- as well as the pyrophosphate-dependent phosphorylation of a specific serine residue in HPr, a phosphocarrier protein of the phosphoenolpyruvate-dependent sugar phosphotransferase system (PTS). HprK/P also catalyzes the pyrophosphate-producing, inorganic phosphate-dependent dephosphorylation (phosphorolysis) of seryl-phosphorylated HPr (P-Ser-HPr). The two antagonistic activities of HprK/P are regulated by several intracellular metabolites, which change their concentration in response to the absence or presence of rapidly metabolisable carbon sources (glucose, fructose, etc.) in the growth medium. Therefore, by controlling the phosphorylation state of HPr, HPrK/P is a sensor enzyme that plays a major role in the regulation of carbon metabolism and sugar transport: it mediates carbon catabolite repression (CCR), and regulates PTS-catalyzed carbohydrate uptake and inducer exclusion. The sequence is that of HPr kinase/phosphorylase from Streptococcus thermophilus (strain ATCC BAA-491 / LMD-9).